We begin with the raw amino-acid sequence, 383 residues long: Polyketide synthase 4 (383 aa).

Residue Cys164 is the Nucleophile and monoketide coumarate intermediate of the active site.

Belongs to the thiolase-like superfamily. Chalcone/stilbene synthases family. Homodimer. Expressed in fruits.

The catalysed reaction is 4-coumaroyl-CoA + malonyl-CoA + H2O + H(+) = 4-hydroxybenzalacetone + 2 CO2 + 2 CoA. The enzyme catalyses (E)-4-coumaroyl-CoA + 3 malonyl-CoA + 3 H(+) = 2',4,4',6'-tetrahydroxychalcone + 3 CO2 + 4 CoA. It functions in the pathway secondary metabolite biosynthesis; flavonoid biosynthesis. Inhibited by glutathione. Its function is as follows. Bifunctional polyketide synthase producing both 4-hydroxybenzalacetone and naringenin chalcone. Can use p-coumaryl-CoA and ferulyl-CoA as substrates. Catalyzes the initial key reaction step in the biosynthesis of phenylbutanoids. The chain is Polyketide synthase 4 (PKS4) from Rubus idaeus (Raspberry).